A 379-amino-acid polypeptide reads, in one-letter code: Retron Se72 reverse transcriptase (379 aa).

Residues 1–245 (MNKPRFNGTP…SKLSVTGLWV (245 aa)) enclose the Reverse transcriptase domain. Mg(2+) contacts are provided by Asp109, Asp188, and Asp189.

Belongs to the bacterial reverse transcriptase family.

The catalysed reaction is DNA(n) + a 2'-deoxyribonucleoside 5'-triphosphate = DNA(n+1) + diphosphate. Reverse transcriptase (RT) component of antiviral defense system retron Se72, composed of a non-coding RNA (ncRNA), this reverse transcriptase (RT) and the following cold shock-like protein. Expression of retron Se72 confers protection against bacteriophage lambda. At multiplicity of infection (MOI) of 0.02 cultures slow growth when infected with lambda but do not collapse, at MOI 2 cultures enter growth stasis. Responsible for synthesis of msDNA (a branched molecule with RNA linked by a 2',5'-phosphodiester bond to ssDNA). The retron transcript serves as primer (from a conserved internal G residue) and template for the reaction, and codes for the RT. The DNA segment is predicted to be 72 bases long. This chain is Retron Se72 reverse transcriptase, found in Salmonella heidelberg (strain 579083-10).